We begin with the raw amino-acid sequence, 44 residues long: Antimicrobial peptide 2 (44 aa).

In terms of processing, disulfide bonds. As to expression, expressed in flowers but not in leaves, seeds or roots (at protein level).

Functionally, antimicrobial peptide. Active against fungal species B.cinerea (IC(50)=5.2 uM), A.niger (IC(50)=2.6 uM) and B.sorokinina (IC(50)=5.2 uM) but not against F.oxysporum, F.graminearum and P.debaryanum at concentrations below 10 uM. Inhibits growth of P.infestans at concentration between 1.3 uM and 5.2 uM. Active against bacterial species P.syringae, B.subtilis, X.campestris and C.michiganense. The polypeptide is Antimicrobial peptide 2 (Taraxacum officinale (Common dandelion)).